The primary structure comprises 446 residues: Telomere-binding protein 51 kDa subunit (446 aa).

Belongs to the telombin family. In terms of assembly, monomer.

The protein localises to the nucleus. The protein resides in the chromosome. It localises to the telomere. Functionally, may function as protective capping of the single-stranded telomeric overhang. May also participate in telomere length regulation during DNA replication. Binds specifically to the T4G4-containing extension on the 3'strand and protects this region of the telomere from nuclease digestion and chemical modification. In Euplotes crassus, this protein is Telomere-binding protein 51 kDa subunit.